The chain runs to 308 residues: Oxygen-dependent coproporphyrinogen-III oxidase (308 aa).

Ser-100 is a substrate binding site. A divalent metal cation contacts are provided by His-104 and His-114. His-114 acts as the Proton donor in catalysis. 116-118 (NFR) is a substrate binding site. A divalent metal cation-binding residues include His-153 and His-183. Residues 248–283 (YVEFNLVFDRGTIFGLQSGGRTESILSSMPPIATWK) are important for dimerization. Residue 266–268 (GGR) coordinates substrate.

Belongs to the aerobic coproporphyrinogen-III oxidase family. In terms of assembly, homodimer. It depends on a divalent metal cation as a cofactor.

It localises to the cytoplasm. The enzyme catalyses coproporphyrinogen III + O2 + 2 H(+) = protoporphyrinogen IX + 2 CO2 + 2 H2O. It participates in porphyrin-containing compound metabolism; protoporphyrin-IX biosynthesis; protoporphyrinogen-IX from coproporphyrinogen-III (O2 route): step 1/1. In terms of biological role, involved in the heme biosynthesis. Catalyzes the aerobic oxidative decarboxylation of propionate groups of rings A and B of coproporphyrinogen-III to yield the vinyl groups in protoporphyrinogen-IX. In Francisella tularensis subsp. tularensis (strain FSC 198), this protein is Oxygen-dependent coproporphyrinogen-III oxidase.